A 107-amino-acid polypeptide reads, in one-letter code: Thioredoxin (107 aa).

Residues 2 to 107 (AGVLKNVTDD…ALLRPGPVPR (106 aa)) form the Thioredoxin domain. Cys-33 and Cys-36 are joined by a disulfide.

The protein belongs to the thioredoxin family.

Its function is as follows. Component of the thioredoxin-thioredoxin reductase system. Participates in various redox reactions through the reversible oxidation of its active center dithiol to a disulfide and catalyzes dithiol-disulfide exchange reactions. The chain is Thioredoxin (trxA) from Streptomyces clavuligerus.